The following is a 124-amino-acid chain: Small ribosomal subunit protein uS13 (124 aa).

The interval 87-124 (GSYRGNRHRKRLPVRGQRTKTNSRTRKGKRRTVGSKTK) is disordered. A compositionally biased stretch (basic residues) spans 91–124 (GNRHRKRLPVRGQRTKTNSRTRKGKRRTVGSKTK).

The protein belongs to the universal ribosomal protein uS13 family. In terms of assembly, part of the 30S ribosomal subunit. Forms a loose heterodimer with protein S19. Forms two bridges to the 50S subunit in the 70S ribosome.

Functionally, located at the top of the head of the 30S subunit, it contacts several helices of the 16S rRNA. In the 70S ribosome it contacts the 23S rRNA (bridge B1a) and protein L5 of the 50S subunit (bridge B1b), connecting the 2 subunits; these bridges are implicated in subunit movement. Contacts the tRNAs in the A and P-sites. In Elusimicrobium minutum (strain Pei191), this protein is Small ribosomal subunit protein uS13.